A 406-amino-acid chain; its full sequence is MPLLRRPPAAPHRTPIHHDKRLHLFSTHNTRHRATVSSLPVTCLRIRYSSSNPVRHLCGIPSSRCHAAADPAPSKIPGGGSGALEAGVVGWRDLLLQVGEVLSLGFPVWVASACAVALWRPPAFLWVSPMAQIVGISFTMLGMGMTLTLDDLKTALLMPKELASGFLLQYSVMPLSGFLISKLLNLPSYYAAGLILVSCCPGGTASNIVTYLARGNVALSVLMTAASTFAAAFLTPLLTSKLAGQYVAVDPMGLFVSTSQVVLAPVLLGALLNQYCNGLVQLVSPLMPFIAVATVAVLCGNAIAQNASAILSSGLQVVMSVCWLHASGFFFGYVLSRTIGIDISSSRTISIEVGMQNSVLGVVLASKHFGNPLTAVPCAVSSVCHSVYGSLLAGIWRSLPPNDKGQ.

The transit peptide at methionine 1–arginine 64 directs the protein to the chloroplast. The next 9 helical transmembrane spans lie at valine 98–leucine 118, alanine 123–methionine 143, leucine 152–valine 172, proline 187–valine 209, valine 217–leucine 237, methionine 252–leucine 272, glycine 278–leucine 298, leucine 315–leucine 335, and valine 376–tryptophan 396.

The protein belongs to the bile acid:sodium symporter (BASS) (TC 2.A.28) family.

It localises to the membrane. Its subcellular location is the plastid. The protein localises to the chloroplast envelope. Functionally, may function as sodium-coupled metabolite transporter across the chloroplast envelope. This Oryza sativa subsp. japonica (Rice) protein is Probable sodium/metabolite cotransporter BASS1, chloroplastic (BASS1).